The primary structure comprises 481 residues: Glycosyl hydrolase family 109 protein 1 (481 aa).

Residues 1–29 (MDNSSSRRRFLQTLGLATGALAAGSFANA) constitute a signal peptide (tat-type signal). NAD(+)-binding positions include 84 to 85 (ER), D106, 155 to 158 (WEWH), 175 to 176 (EV), and N204. Residues Y233, R252, 264-267 (YPTH), and Y347 contribute to the substrate site. Y264 is a binding site for NAD(+).

It belongs to the Gfo/Idh/MocA family. Glycosyl hydrolase 109 subfamily. NAD(+) serves as cofactor. Post-translationally, predicted to be exported by the Tat system. The position of the signal peptide cleavage has not been experimentally proven.

Glycosidase. This is Glycosyl hydrolase family 109 protein 1 from Akkermansia muciniphila (strain ATCC BAA-835 / DSM 22959 / JCM 33894 / BCRC 81048 / CCUG 64013 / CIP 107961 / Muc).